A 304-amino-acid chain; its full sequence is Zinc carboxypeptidase (304 aa).

The 294-residue stretch at 1–294 (QYHTLPEIYS…DSVVTILKES (294 aa)) folds into the Peptidase M14 domain. Histidine 58 and glutamate 61 together coordinate Zn(2+). Cysteines 125 and 148 form a disulfide. Histidine 184 is a binding site for Zn(2+). Glutamate 259 acts as the Proton donor/acceptor in catalysis.

Belongs to the peptidase M14 family. Zn(2+) is required as a cofactor. In terms of tissue distribution, gut specific.

It localises to the secreted. In terms of biological role, involved in the digestion of the blood meal. In Simulium vittatum (Striped black fly), this protein is Zinc carboxypeptidase.